The following is a 184-amino-acid chain: Cytidylate kinase (184 aa).

Position 8–16 (8–16 (GQPGSGKTT)) interacts with ATP.

The protein belongs to the cytidylate kinase family. Type 2 subfamily.

The protein resides in the cytoplasm. It catalyses the reaction CMP + ATP = CDP + ADP. It carries out the reaction dCMP + ATP = dCDP + ADP. The protein is Cytidylate kinase of Pyrobaculum calidifontis (strain DSM 21063 / JCM 11548 / VA1).